A 327-amino-acid polypeptide reads, in one-letter code: Tetraacyldisaccharide 4'-kinase (327 aa).

ATP is bound at residue 58–65; it reads TVGGTGKT.

The protein belongs to the LpxK family.

It catalyses the reaction a lipid A disaccharide + ATP = a lipid IVA + ADP + H(+). Its pathway is glycolipid biosynthesis; lipid IV(A) biosynthesis; lipid IV(A) from (3R)-3-hydroxytetradecanoyl-[acyl-carrier-protein] and UDP-N-acetyl-alpha-D-glucosamine: step 6/6. Transfers the gamma-phosphate of ATP to the 4'-position of a tetraacyldisaccharide 1-phosphate intermediate (termed DS-1-P) to form tetraacyldisaccharide 1,4'-bis-phosphate (lipid IVA). The chain is Tetraacyldisaccharide 4'-kinase from Alcanivorax borkumensis (strain ATCC 700651 / DSM 11573 / NCIMB 13689 / SK2).